Consider the following 24-residue polypeptide: Antimicrobial peptide PGQ (24 aa).

Belongs to the gastrin/cholecystokinin family. Magainin subfamily. As to expression, is synthesized in the stomach and stored in a novel granular multinucleated cell in the gastric mucosa. It is stored as active, processed peptides in large granules within the granular gland secretions of the skin.

The protein localises to the secreted. Its function is as follows. Antimicrobial peptide. This Xenopus laevis (African clawed frog) protein is Antimicrobial peptide PGQ (pgq).